The chain runs to 618 residues: Camphene synthase, chloroplastic (618 aa).

The N-terminal 51 residues, 1 to 51 (MALLSITPLVSRSCLSSSHEIKALRRTIPTLGICRPGKSVAHSINMCLTSV), are a transit peptide targeting the chloroplast. 3 residues coordinate Mg(2+): Asp369, Asp373, and Asp521. The DDXXD motif signature appears at 369–373 (DDMYD).

This sequence belongs to the terpene synthase family. Tpsd subfamily. It depends on Mg(2+) as a cofactor. Requires Mn(2+) as cofactor. K(+) is required as a cofactor.

It is found in the plastid. The protein resides in the chloroplast. It catalyses the reaction (2E)-geranyl diphosphate = (1S,4R)-camphene + diphosphate. Its pathway is terpene metabolism; oleoresin biosynthesis. Its function is as follows. Involved in defensive oleoresin formation in conifers in response to insect attack or other injury. Involved in monoterpene (C10) olefins biosynthesis. The polypeptide is Camphene synthase, chloroplastic (ag6) (Abies grandis (Grand fir)).